Here is a 328-residue protein sequence, read N- to C-terminus: MLTLESALTGAVASAMANIAVYPLDLSKTIIQSQVSPSSSEDSNEGKVLPNRRYKNVVDCMINIFKEKGILGLYQGMTVTTVATFVQNFVYFFWYTFIRKSYMKHKLLGLQSLKNRDGPITPSTIEELVLGVAAASISQLFTSPMAVVATRQQTVHSAESAKFTNVIKDIYRENNGDITAFWKGLRTGLALTINPSITYASFQRLKEVFFHDHSNDAGSLSAVQNFILGVLSKMISTLVTQPLIVAKAMLQSAGSKFTTFQEALLYLYKNEGLKSLWKGVLPQLTKGVIVQGLLFAFRGELTKSLKRLIFLYSSFFLKHNGQRKLAST.

6 helical membrane passes run 1 to 21, 78 to 98, 128 to 148, 185 to 202, 226 to 246, and 277 to 297; these read MLTLESALTGAVASAMANIAV, TVTTVATFVQNFVYFFWYTFI, LVLGVAAASISQLFTSPMAVV, LRTGLALTINPSITYASF, FILGVLSKMISTLVTQPLIVA, and WKGVLPQLTKGVIVQGLLFAF. 3 Solcar repeats span residues 1 to 101, 122 to 208, and 220 to 304; these read MLTL…IRKS, PSTI…LKEV, and LSAV…LTKS.

It belongs to the mitochondrial carrier (TC 2.A.29) family.

The protein localises to the peroxisome membrane. Its function is as follows. Adenine nucleotide transporter involved in the uniport of ATP and adenine nucleotide hetero-exchange transport between the cytosol and the peroxisomal lumen. This transport is accompanied by a proton transport from the peroxisomal lumen to the cytosol. Transport of ATP into the peroxisome is required for beta-oxidation of medium-chain fatty acids. Required for growth on medium-chain fatty acids, pH gradient formation in peroxisomes and for normal peroxisome proliferation. This Saccharomyces cerevisiae (strain ATCC 204508 / S288c) (Baker's yeast) protein is Peroxisomal adenine nucleotide transporter 1 (ANT1).